The sequence spans 241 residues: Adenosylcobinamide-GDP ribazoletransferase (241 aa).

4 consecutive transmembrane segments (helical) span residues L34–F54, V108–I128, L184–L206, and F220–P240.

Belongs to the CobS family. It depends on Mg(2+) as a cofactor.

The protein resides in the cell membrane. The enzyme catalyses alpha-ribazole + adenosylcob(III)inamide-GDP = adenosylcob(III)alamin + GMP + H(+). It catalyses the reaction alpha-ribazole 5'-phosphate + adenosylcob(III)inamide-GDP = adenosylcob(III)alamin 5'-phosphate + GMP + H(+). It participates in cofactor biosynthesis; adenosylcobalamin biosynthesis; adenosylcobalamin from cob(II)yrinate a,c-diamide: step 7/7. In terms of biological role, joins adenosylcobinamide-GDP and alpha-ribazole to generate adenosylcobalamin (Ado-cobalamin). Also synthesizes adenosylcobalamin 5'-phosphate from adenosylcobinamide-GDP and alpha-ribazole 5'-phosphate. The polypeptide is Adenosylcobinamide-GDP ribazoletransferase (Methanopyrus kandleri (strain AV19 / DSM 6324 / JCM 9639 / NBRC 100938)).